Here is an 86-residue protein sequence, read N- to C-terminus: Small ribosomal subunit protein bS18c (86 aa).

It belongs to the bacterial ribosomal protein bS18 family. In terms of assembly, part of the 30S ribosomal subunit.

The protein localises to the plastid. It localises to the chloroplast. The polypeptide is Small ribosomal subunit protein bS18c (Larix laricina (Tamarack)).